The sequence spans 304 residues: Hairy/enhancer-of-split related with YRPW motif protein 1 (304 aa).

The interval 1 to 52 (MKRAHPDYSSSDSELDETVEVEKESADENGNLSSALGSMSPTTSSQILARKR) is disordered. Residues 28 to 47 (ENGNLSSALGSMSPTTSSQI) show a composition bias toward polar residues. The interval 48-117 (LARKRRRGII…GGKGYFDAHA (70 aa)) is transcriptional repression and interaction with NCOR1 and SIN3A. In terms of domain architecture, bHLH spans 49-104 (ARKRRRGIIEKRRRDRINNSLSELRRLVPSAFEKQGSAKLEKAEILQMTVDHLKML). Residues 122-158 (YRSLGFRECLAEVARYLSIIEGLDASDPLRVRLVSHL) form the Orange domain. Residues 191–234 (AHPLLLPQSGHGNTGTSASPTDPHHQGRLAAAHPEAPALRAPPS) form a disordered region. Positions 200-210 (GHGNTGTSASP) are enriched in polar residues. A compositionally biased stretch (low complexity) spans 218-234 (RLAAAHPEAPALRAPPS).

This sequence belongs to the HEY family. Self-associates. Interacts with HES1 and HEYL. Interacts with HDAC1, NCOR1 and SIN3A. Interacts with GATA4 and GATA6. Interacts with CCDC89/BOIP.

Its subcellular location is the nucleus. Functionally, transcriptional repressor which binds preferentially to the canonical E box sequence 5'-CACGTG-3'. Downstream effector of Notch signaling required for cardiovascular development. Specifically required for the Notch-induced endocardial epithelial to mesenchymal transition, which is itself criticial for cardiac valve and septum development. May be required in conjunction with HEY2 to specify arterial cell fate or identity. Promotes maintenance of neuronal precursor cells and glial versus neuronal fate specification. Represses transcription by the cardiac transcriptional activators GATA4 and GATA6 and by the neuronal bHLH factors ASCL1/MASH1 and NEUROD4/MATH3. This Canis lupus familiaris (Dog) protein is Hairy/enhancer-of-split related with YRPW motif protein 1 (HEY1).